A 364-amino-acid polypeptide reads, in one-letter code: Histidinol-phosphate aminotransferase (364 aa).

The disordered stretch occupies residues 1-46 (MQPRDLSDHSPYVPGRGVEEVARDRGLDPDDLIKLSSNENPHGPSP). A compositionally biased stretch (basic and acidic residues) spans 17 to 33 (GVEEVARDRGLDPDDLI). Residue lysine 222 is modified to N6-(pyridoxal phosphate)lysine.

It belongs to the class-II pyridoxal-phosphate-dependent aminotransferase family. Histidinol-phosphate aminotransferase subfamily. Pyridoxal 5'-phosphate is required as a cofactor.

It catalyses the reaction L-histidinol phosphate + 2-oxoglutarate = 3-(imidazol-4-yl)-2-oxopropyl phosphate + L-glutamate. Its pathway is amino-acid biosynthesis; L-histidine biosynthesis; L-histidine from 5-phospho-alpha-D-ribose 1-diphosphate: step 7/9. In Halorubrum lacusprofundi (strain ATCC 49239 / DSM 5036 / JCM 8891 / ACAM 34), this protein is Histidinol-phosphate aminotransferase.